The chain runs to 513 residues: Light-independent protochlorophyllide reductase subunit B (513 aa).

Position 36 (Asp36) interacts with [4Fe-4S] cluster. Asp299 serves as the catalytic Proton donor. 434–435 (GM) is a binding site for substrate.

The protein belongs to the ChlB/BchB/BchZ family. In terms of assembly, protochlorophyllide reductase is composed of three subunits; ChlL, ChlN and ChlB. Forms a heterotetramer of two ChlB and two ChlN subunits. The cofactor is [4Fe-4S] cluster.

It localises to the plastid. The protein resides in the chloroplast. The enzyme catalyses chlorophyllide a + oxidized 2[4Fe-4S]-[ferredoxin] + 2 ADP + 2 phosphate = protochlorophyllide a + reduced 2[4Fe-4S]-[ferredoxin] + 2 ATP + 2 H2O. The protein operates within porphyrin-containing compound metabolism; chlorophyll biosynthesis (light-independent). Functionally, component of the dark-operative protochlorophyllide reductase (DPOR) that uses Mg-ATP and reduced ferredoxin to reduce ring D of protochlorophyllide (Pchlide) to form chlorophyllide a (Chlide). This reaction is light-independent. The NB-protein (ChlN-ChlB) is the catalytic component of the complex. This chain is Light-independent protochlorophyllide reductase subunit B, found in Chaetosphaeridium globosum (Charophycean green alga).